A 586-amino-acid polypeptide reads, in one-letter code: Serine/threonine-protein kinase TDA1 (586 aa).

Residues 1-26 form a disordered region; that stretch reads MTTASSSASQLQQRLPEEKPWPQLSG. One can recognise a Protein kinase domain in the interval 39 to 351; that stretch reads VTNHNSLGDG…AKNLKQHPFI (313 aa). ATP-binding positions include 45–53 and K68; that span reads LGDGNFSVV. D180 acts as the Proton acceptor in catalysis. The tract at residues 503–524 is disordered; the sequence is TTPESRSNFNTPKTLSRQGSST. T504 carries the post-translational modification Phosphothreonine. Residues S509 and S518 each carry the phosphoserine modification. T538 is subject to Phosphothreonine. S578 carries the phosphoserine modification.

This sequence belongs to the protein kinase superfamily. Ser/Thr protein kinase family. Interacts with RIM11.

The protein resides in the cytoplasm. It is found in the nucleus. It carries out the reaction L-seryl-[protein] + ATP = O-phospho-L-seryl-[protein] + ADP + H(+). The enzyme catalyses L-threonyl-[protein] + ATP = O-phospho-L-threonyl-[protein] + ADP + H(+). Serine/threonine protein kinase shown to have protein phosphorylation activity in vitro. This chain is Serine/threonine-protein kinase TDA1 (TDA1), found in Saccharomyces cerevisiae (strain ATCC 204508 / S288c) (Baker's yeast).